A 360-amino-acid polypeptide reads, in one-letter code: Phospho-N-acetylmuramoyl-pentapeptide-transferase (360 aa).

The next 10 helical transmembrane spans lie at 27–47 (IVSL…LIAW), 72–92 (PTMG…MWAY), 94–114 (SNPY…VGFI), 132–152 (WKYF…YSIG), 168–188 (IMPQ…VGTS), 199–219 (GLAI…AWAT), 236–256 (AGEL…FLWF), 263–283 (VFMG…IAVL), 288–308 (FLLV…ILQV), and 338–358 (VIVR…ATLK).

Belongs to the glycosyltransferase 4 family. MraY subfamily. Mg(2+) is required as a cofactor.

It is found in the cell inner membrane. The enzyme catalyses UDP-N-acetyl-alpha-D-muramoyl-L-alanyl-gamma-D-glutamyl-meso-2,6-diaminopimeloyl-D-alanyl-D-alanine + di-trans,octa-cis-undecaprenyl phosphate = di-trans,octa-cis-undecaprenyl diphospho-N-acetyl-alpha-D-muramoyl-L-alanyl-D-glutamyl-meso-2,6-diaminopimeloyl-D-alanyl-D-alanine + UMP. It participates in cell wall biogenesis; peptidoglycan biosynthesis. Functionally, catalyzes the initial step of the lipid cycle reactions in the biosynthesis of the cell wall peptidoglycan: transfers peptidoglycan precursor phospho-MurNAc-pentapeptide from UDP-MurNAc-pentapeptide onto the lipid carrier undecaprenyl phosphate, yielding undecaprenyl-pyrophosphoryl-MurNAc-pentapeptide, known as lipid I. The protein is Phospho-N-acetylmuramoyl-pentapeptide-transferase of Yersinia pestis bv. Antiqua (strain Angola).